A 592-amino-acid polypeptide reads, in one-letter code: Isocitrate dehydrogenase kinase/phosphatase 1 (592 aa).

Residues 337 to 343 and Lys-358 contribute to the ATP site; that span reads APGTPGM. The active site involves Asp-393.

The protein belongs to the AceK family.

It localises to the cytoplasm. It carries out the reaction L-seryl-[isocitrate dehydrogenase] + ATP = O-phospho-L-seryl-[isocitrate dehydrogenase] + ADP + H(+). Bifunctional enzyme which can phosphorylate or dephosphorylate isocitrate dehydrogenase (IDH) on a specific serine residue. This is a regulatory mechanism which enables bacteria to bypass the Krebs cycle via the glyoxylate shunt in response to the source of carbon. When bacteria are grown on glucose, IDH is fully active and unphosphorylated, but when grown on acetate or ethanol, the activity of IDH declines drastically concomitant with its phosphorylation. This is Isocitrate dehydrogenase kinase/phosphatase 1 from Pseudoalteromonas translucida (strain TAC 125).